A 420-amino-acid polypeptide reads, in one-letter code: Probable protein phosphatase 2C 76 (420 aa).

The PPM-type phosphatase domain maps to 101 to 347 (SCGYCSFRGK…DNITCIVVKF (247 aa)). Mn(2+) is bound by residues D137, G138, D299, and D338. Positions 353–420 (ESPKIETNAM…PETKGEKAGE (68 aa)) are disordered. The span at 403 to 420 (PDPKPETEPETKGEKAGE) shows a compositional bias: basic and acidic residues.

This sequence belongs to the PP2C family. It depends on Mg(2+) as a cofactor. The cofactor is Mn(2+).

The enzyme catalyses O-phospho-L-seryl-[protein] + H2O = L-seryl-[protein] + phosphate. The catalysed reaction is O-phospho-L-threonyl-[protein] + H2O = L-threonyl-[protein] + phosphate. This Arabidopsis thaliana (Mouse-ear cress) protein is Probable protein phosphatase 2C 76.